The following is a 136-amino-acid chain: MVLLESEQFLTELTRLFQKCRTSGSVYITLKKYDGRTKPIPKKGTVEGFEPADNKCLLRATDGKKKISTVVSSKEVNKFQMAYSNLLRANMDGLKKRDKKNKTKKTKAAAAAAAAAPAAAATAATTAATTAATAAQ.

Tyr-27 is subject to Phosphotyrosine.

This sequence belongs to the SRP14 family. Heterodimer with SRP9; binds RNA as heterodimer. Component of a signal recognition particle (SRP) complex that consists of a 7SL RNA molecule of 300 nucleotides and six protein subunits: SRP72, SRP68, SRP54, SRP19, SRP14 and SRP9.

The protein resides in the cytoplasm. Functionally, component of the signal recognition particle (SRP) complex, a ribonucleoprotein complex that mediates the cotranslational targeting of secretory and membrane proteins to the endoplasmic reticulum (ER). SRP9 together with SRP14 and the Alu portion of the SRP RNA, constitutes the elongation arrest domain of SRP. The complex of SRP9 and SRP14 is required for SRP RNA binding. The sequence is that of Signal recognition particle 14 kDa protein (SRP14) from Pongo abelii (Sumatran orangutan).